A 141-amino-acid chain; its full sequence is Envelope glycoprotein L (141 aa).

Positions Met1–Ala19 are cleaved as a signal peptide. Residues Ile21–Tyr131 form an interaction with gH region.

This sequence belongs to the herpesviridae glycoprotein L family. Interacts with glycoprotein H (gH); this interaction is necessary for the correct processing and cell surface expression of gH. The heterodimer gH/gL seems to interact with gB trimers during fusion.

Its subcellular location is the virion membrane. The protein resides in the host cell membrane. The protein localises to the host Golgi apparatus. It localises to the host trans-Golgi network. Functionally, the heterodimer glycoprotein H-glycoprotein L is required for the fusion of viral and plasma membranes leading to virus entry into the host cell. Acts as a functional inhibitor of gH and maintains gH in an inhibited form. Upon binding to host integrins, gL dissociates from gH leading to activation of the viral fusion glycoproteins gB and gH. This chain is Envelope glycoprotein L, found in Saimiriine herpesvirus 2 (strain 11) (SaHV-2).